A 149-amino-acid chain; its full sequence is Protein DOWN-REGULATED IN DIF1 11 (149 aa).

The first 22 residues, 1 to 22 (MEKAILITFLIATTSMVYQTIG), serve as a signal peptide directing secretion.

Mostly expressed in embryo sac cells. Restricted to synergid cells, especially in the filiform apparatus of mature female gametophyte, via MYB98-mediated transcription regulation. Also detected at low levels in egg and central cells.

This chain is Protein DOWN-REGULATED IN DIF1 11, found in Arabidopsis thaliana (Mouse-ear cress).